The following is a 324-amino-acid chain: Beta-ketoacyl-[acyl-carrier-protein] synthase III (324 aa).

Active-site residues include C112 and H249. Residues 250–254 (QANRR) are ACP-binding. N279 is a catalytic residue.

The protein belongs to the thiolase-like superfamily. FabH family. In terms of assembly, homodimer.

The protein localises to the cytoplasm. It catalyses the reaction malonyl-[ACP] + acetyl-CoA + H(+) = 3-oxobutanoyl-[ACP] + CO2 + CoA. It participates in lipid metabolism; fatty acid biosynthesis. Its function is as follows. Catalyzes the condensation reaction of fatty acid synthesis by the addition to an acyl acceptor of two carbons from malonyl-ACP. Catalyzes the first condensation reaction which initiates fatty acid synthesis and may therefore play a role in governing the total rate of fatty acid production. Possesses both acetoacetyl-ACP synthase and acetyl transacylase activities. Its substrate specificity determines the biosynthesis of branched-chain and/or straight-chain of fatty acids. This Streptococcus pyogenes serotype M6 (strain ATCC BAA-946 / MGAS10394) protein is Beta-ketoacyl-[acyl-carrier-protein] synthase III.